Reading from the N-terminus, the 383-residue chain is Galactokinase (383 aa).

34 to 37 is a substrate binding site; sequence EHTD. Residue 124 to 130 participates in ATP binding; sequence GAGLSSS. The Mg(2+) site is built by serine 130 and glutamate 162. The active-site Proton acceptor is aspartate 174. Substrate is bound at residue tyrosine 223.

This sequence belongs to the GHMP kinase family. GalK subfamily.

The protein localises to the cytoplasm. It catalyses the reaction alpha-D-galactose + ATP = alpha-D-galactose 1-phosphate + ADP + H(+). It functions in the pathway carbohydrate metabolism; galactose metabolism. In terms of biological role, catalyzes the transfer of the gamma-phosphate of ATP to D-galactose to form alpha-D-galactose-1-phosphate (Gal-1-P). The protein is Galactokinase of Serratia proteamaculans (strain 568).